The sequence spans 618 residues: 2-succinyl-5-enolpyruvyl-6-hydroxy-3-cyclohexene-1-carboxylate synthase (618 aa).

The interval 192–215 is disordered; it reads DPVAERGRDGPYVDVTPGSPEPGD.

The protein belongs to the TPP enzyme family. MenD subfamily. In terms of assembly, homodimer. Requires Mg(2+) as cofactor. Mn(2+) serves as cofactor. Thiamine diphosphate is required as a cofactor.

It catalyses the reaction isochorismate + 2-oxoglutarate + H(+) = 5-enolpyruvoyl-6-hydroxy-2-succinyl-cyclohex-3-ene-1-carboxylate + CO2. It participates in quinol/quinone metabolism; 1,4-dihydroxy-2-naphthoate biosynthesis; 1,4-dihydroxy-2-naphthoate from chorismate: step 2/7. The protein operates within quinol/quinone metabolism; menaquinone biosynthesis. Catalyzes the thiamine diphosphate-dependent decarboxylation of 2-oxoglutarate and the subsequent addition of the resulting succinic semialdehyde-thiamine pyrophosphate anion to isochorismate to yield 2-succinyl-5-enolpyruvyl-6-hydroxy-3-cyclohexene-1-carboxylate (SEPHCHC). This is 2-succinyl-5-enolpyruvyl-6-hydroxy-3-cyclohexene-1-carboxylate synthase from Halorubrum lacusprofundi (strain ATCC 49239 / DSM 5036 / JCM 8891 / ACAM 34).